Here is a 124-residue protein sequence, read N- to C-terminus: UPF0225 protein SCO1677 (124 aa).

This sequence belongs to the UPF0225 family.

The protein is UPF0225 protein SCO1677 of Streptomyces coelicolor (strain ATCC BAA-471 / A3(2) / M145).